The following is a 559-amino-acid chain: Suppressor of tumorigenicity 7 protein-like (559 aa).

Helical transmembrane passes span 39–59 (GLANSGSTLWFLAGLGLLYAL), 83–103 (FYVALTGTSSLISGLIFIFEW), and 513–533 (LPFFIHFTAGLCSSTAMIALL).

The protein belongs to the ST7 family.

The protein resides in the membrane. The polypeptide is Suppressor of tumorigenicity 7 protein-like (St7l) (Rattus norvegicus (Rat)).